Reading from the N-terminus, the 79-residue chain is Sec-independent protein translocase protein TatA (79 aa).

A helical membrane pass occupies residues 1 to 21 (MGSLSIWHWIVVIAVILLLFG). A compositionally biased stretch (basic and acidic residues) spans 43 to 60 (MQDDEKTAEKPEPVKTID). The segment at 43–79 (MQDDEKTAEKPEPVKTIDHNAPAPGASRSDVGSKTTV) is disordered.

The protein belongs to the TatA/E family. In terms of assembly, the Tat system comprises two distinct complexes: a TatABC complex, containing multiple copies of TatA, TatB and TatC subunits, and a separate TatA complex, containing only TatA subunits. Substrates initially bind to the TatABC complex, which probably triggers association of the separate TatA complex to form the active translocon.

The protein localises to the cell inner membrane. Functionally, part of the twin-arginine translocation (Tat) system that transports large folded proteins containing a characteristic twin-arginine motif in their signal peptide across membranes. TatA could form the protein-conducting channel of the Tat system. The polypeptide is Sec-independent protein translocase protein TatA (Nitrobacter hamburgensis (strain DSM 10229 / NCIMB 13809 / X14)).